Reading from the N-terminus, the 335-residue chain is Cytoskeleton protein RodZ (335 aa).

Residues 1–111 lie on the Cytoplasmic side of the membrane; that stretch reads MNTEATHDQN…LGKRRKKRDG (111 aa). Residues 19 to 71 form the HTH cro/C1-type domain; sequence LRNAREQLGLSQQAVAERLCLKVSTVRDIEEDKAPADLASTFLRGYIRSYARL. A DNA-binding region (H-T-H motif) is located at residues 30-49; it reads QQAVAERLCLKVSTVRDIEE. Residues 112–132 traverse the membrane as a helical; Signal-anchor for type II membrane protein segment; the sequence is WLMTFTWLVLFVVIGLSGAWW. At 133-335 the chain is on the periplasmic side; the sequence is WQDHKAQQEE…TLNAEQSPAQ (203 aa). Residues 148 to 164 are compositionally biased toward polar residues; the sequence is DQSSAELNNNQSQSVPL. Positions 148–244 are disordered; it reads DQSSAELNNN…PLPTDQAGVT (97 aa). 2 stretches are compositionally biased toward low complexity: residues 165 to 205 and 217 to 239; these read DTST…DPQQ and DTAA…LPTD.

Belongs to the RodZ family.

The protein resides in the cell inner membrane. Its function is as follows. Cytoskeletal protein that is involved in cell-shape control through regulation of the length of the long axis. The sequence is that of Cytoskeleton protein RodZ from Escherichia coli O127:H6 (strain E2348/69 / EPEC).